A 332-amino-acid polypeptide reads, in one-letter code: 2,3-diketo-L-gulonate reductase (332 aa).

The Proton donor role is filled by histidine 44. NAD(+) is bound by residues 168-174 (ITMVDMS), 224-225 (WK), and 304-306 (GHE).

This sequence belongs to the LDH2/MDH2 oxidoreductase family. DlgD subfamily. As to quaternary structure, homodimer.

It is found in the cytoplasm. The enzyme catalyses 3-dehydro-L-gulonate + NAD(+) = 2,3-dioxo-L-gulonate + NADH + H(+). It carries out the reaction 3-dehydro-L-gulonate + NADP(+) = 2,3-dioxo-L-gulonate + NADPH + H(+). Catalyzes the reduction of 2,3-diketo-L-gulonate in the presence of NADH, to form 3-keto-L-gulonate. The chain is 2,3-diketo-L-gulonate reductase from Escherichia coli O139:H28 (strain E24377A / ETEC).